A 521-amino-acid polypeptide reads, in one-letter code: NAD(P)H-quinone oxidoreductase subunit 2 (521 aa).

The next 14 membrane-spanning stretches (helical) occupy residues 14–34 (VILP…TDLI), 42–62 (LTPA…TLQW), 79–99 (LSIV…LLSI), 109–129 (LGEF…LSGA), 132–152 (LVTI…LTGY), 167–187 (LLIG…LYGL), 207–227 (LALL…ISAV), 241–261 (PTPI…ALAI), 275–295 (WHFV…VVAL), 303–323 (LLAY…IAGT), 331–351 (VYYL…VILF), 375–395 (LGLS…GFFG), 397–417 (LYLF…LALI), and 463–483 (AGLV…NPLF).

This sequence belongs to the complex I subunit 2 family. NDH-1 can be composed of about 15 different subunits; different subcomplexes with different compositions have been identified which probably have different functions.

It localises to the cellular thylakoid membrane. The catalysed reaction is a plastoquinone + NADH + (n+1) H(+)(in) = a plastoquinol + NAD(+) + n H(+)(out). It catalyses the reaction a plastoquinone + NADPH + (n+1) H(+)(in) = a plastoquinol + NADP(+) + n H(+)(out). NDH-1 shuttles electrons from an unknown electron donor, via FMN and iron-sulfur (Fe-S) centers, to quinones in the respiratory and/or the photosynthetic chain. The immediate electron acceptor for the enzyme in this species is believed to be plastoquinone. Couples the redox reaction to proton translocation, and thus conserves the redox energy in a proton gradient. Cyanobacterial NDH-1 also plays a role in inorganic carbon-concentration. The sequence is that of NAD(P)H-quinone oxidoreductase subunit 2 from Synechococcus elongatus (strain ATCC 33912 / PCC 7942 / FACHB-805) (Anacystis nidulans R2).